The chain runs to 488 residues: Acetyl-coenzyme A carboxylase carboxyl transferase subunit beta, chloroplastic (488 aa).

The CoA carboxyltransferase N-terminal domain maps to 224–488 (LWIQCDNCYG…FFPLNKNEIK (265 aa)). Cys228, Cys231, Cys244, and Cys247 together coordinate Zn(2+). The segment at 228-247 (CDNCYGLMYKKVEMNVCEEC) adopts a C4-type zinc-finger fold.

It belongs to the AccD/PCCB family. In terms of assembly, acetyl-CoA carboxylase is a heterohexamer composed of biotin carboxyl carrier protein, biotin carboxylase and 2 subunits each of ACCase subunit alpha and ACCase plastid-coded subunit beta (accD). Zn(2+) is required as a cofactor.

Its subcellular location is the plastid. The protein resides in the chloroplast stroma. The catalysed reaction is N(6)-carboxybiotinyl-L-lysyl-[protein] + acetyl-CoA = N(6)-biotinyl-L-lysyl-[protein] + malonyl-CoA. The protein operates within lipid metabolism; malonyl-CoA biosynthesis; malonyl-CoA from acetyl-CoA: step 1/1. In terms of biological role, component of the acetyl coenzyme A carboxylase (ACC) complex. Biotin carboxylase (BC) catalyzes the carboxylation of biotin on its carrier protein (BCCP) and then the CO(2) group is transferred by the transcarboxylase to acetyl-CoA to form malonyl-CoA. This is Acetyl-coenzyme A carboxylase carboxyl transferase subunit beta, chloroplastic from Arabis hirsuta (Hairy rock-cress).